A 219-amino-acid polypeptide reads, in one-letter code: MDKRIIVALDVKEKKKAIDIAESLSDIVFAFKINWPLVLYSSPEVIGEISQYGKVICDFKVADIPYTNSLITERVRDLGAWGIISHSFLGEESLKSVVNAAKGMHVFSVVAMSHPGSDMINSNAMQLMKLSIECGVYGFVAPANKIDDLRMIRSATDRVIISPGIGAQGGDPYTAVLNGSDYLIVGRSVYESDKPELEVSKLQQTAERAIEDRERLKNS.

Substrate is bound by residues Asp10, Lys32, 58-67 (DFKVADIPYT), Ser113, 163-173 (PGIGAQGGDPY), Gly186, and Arg187. The active-site Proton donor is Lys60.

It belongs to the OMP decarboxylase family. Type 1 subfamily. As to quaternary structure, homodimer.

The enzyme catalyses orotidine 5'-phosphate + H(+) = UMP + CO2. It participates in pyrimidine metabolism; UMP biosynthesis via de novo pathway; UMP from orotate: step 2/2. Functionally, catalyzes the decarboxylation of orotidine 5'-monophosphate (OMP) to uridine 5'-monophosphate (UMP). The sequence is that of Orotidine 5'-phosphate decarboxylase from Thermoplasma volcanium (strain ATCC 51530 / DSM 4299 / JCM 9571 / NBRC 15438 / GSS1).